Here is a 293-residue protein sequence, read N- to C-terminus: FAS1 domain-containing protein DEHA2G15708g (293 aa).

The N-terminal stretch at 1-18 (MKLSSILYVSVLAHLVMS) is a signal peptide. Basic and acidic residues predominate over residues 76–87 (DHIGENEKREAK). Residues 76 to 126 (DHIGENEKREAKNVYNLQSLKEGLDDENDKREGNVNKPEVSEEGSNKGDKR) are disordered. In terms of domain architecture, FAS1 spans 141 to 290 (QNLLQSILPQ…GYIFVINDVL (150 aa)).

It is found in the vacuole. In Debaryomyces hansenii (strain ATCC 36239 / CBS 767 / BCRC 21394 / JCM 1990 / NBRC 0083 / IGC 2968) (Yeast), this protein is FAS1 domain-containing protein DEHA2G15708g.